Reading from the N-terminus, the 145-residue chain is Transcriptional anti-antiactivator ExsC (145 aa).

As to quaternary structure, homodimer. Interacts with ExsE. Interacts directly with ExsD to form a heterotetrameric complex.

Its subcellular location is the cytoplasm. In the absence of inducing signals, ExsE interacts with and inhibits ExsC activity. Functionally, part of the regulatory cascade that plays a role in the transcriptional regulation of the type III secretion system (T3SS). Interacts with antiactivator ExsD to inhibit its activity leading to ExsA-mediated transcription. This Pseudomonas aeruginosa (strain ATCC 15692 / DSM 22644 / CIP 104116 / JCM 14847 / LMG 12228 / 1C / PRS 101 / PAO1) protein is Transcriptional anti-antiactivator ExsC (exsC).